A 62-amino-acid chain; its full sequence is MVKASRETRSKFLKVKCPDCENEQLVFEKATSVVECTVCGRILAEPTGGKAALKADIVATFE.

Residues Cys17, Cys20, Cys36, and Cys39 each coordinate Zn(2+). The C4-type zinc finger occupies 17 to 39 (CPDCENEQLVFEKATSVVECTVC).

The protein belongs to the eukaryotic ribosomal protein eS27 family. Part of the 30S ribosomal subunit. Zn(2+) is required as a cofactor.

This is Small ribosomal subunit protein eS27 from Methanocorpusculum labreanum (strain ATCC 43576 / DSM 4855 / Z).